The sequence spans 21 residues: Cardiotoxin-like basic polypeptide ah (21 aa).

This sequence belongs to the three-finger toxin family. Short-chain subfamily. Orphan group XV sub-subfamily. Post-translationally, contains 4 disulfide bonds. Expressed by the venom gland.

The protein localises to the secreted. It localises to the target cell membrane. In terms of biological role, has hemolytic activity under low-lecithin conditions. Has low cytotoxic activity. Inhibits the expression of VEGF and bFGF in human non-small-cell lung cancer cell line NCI-H1299 in a dose-dependent manner. The polypeptide is Cardiotoxin-like basic polypeptide ah (Naja atra (Chinese cobra)).